Here is a 446-residue protein sequence, read N- to C-terminus: UDP-N-acetylmuramoylalanine--D-glutamate ligase (446 aa).

118–124 (GSNGKST) is a binding site for ATP.

This sequence belongs to the MurCDEF family.

The protein resides in the cytoplasm. The catalysed reaction is UDP-N-acetyl-alpha-D-muramoyl-L-alanine + D-glutamate + ATP = UDP-N-acetyl-alpha-D-muramoyl-L-alanyl-D-glutamate + ADP + phosphate + H(+). Its pathway is cell wall biogenesis; peptidoglycan biosynthesis. Cell wall formation. Catalyzes the addition of glutamate to the nucleotide precursor UDP-N-acetylmuramoyl-L-alanine (UMA). The chain is UDP-N-acetylmuramoylalanine--D-glutamate ligase from Pseudoalteromonas translucida (strain TAC 125).